The primary structure comprises 166 residues: Crossover junction endodeoxyribonuclease RuvC (166 aa).

Catalysis depends on residues aspartate 7, glutamate 67, and aspartate 140. 3 residues coordinate Mg(2+): aspartate 7, glutamate 67, and aspartate 140.

The protein belongs to the RuvC family. Homodimer which binds Holliday junction (HJ) DNA. The HJ becomes 2-fold symmetrical on binding to RuvC with unstacked arms; it has a different conformation from HJ DNA in complex with RuvA. In the full resolvosome a probable DNA-RuvA(4)-RuvB(12)-RuvC(2) complex forms which resolves the HJ. Requires Mg(2+) as cofactor.

The protein resides in the cytoplasm. The enzyme catalyses Endonucleolytic cleavage at a junction such as a reciprocal single-stranded crossover between two homologous DNA duplexes (Holliday junction).. The RuvA-RuvB-RuvC complex processes Holliday junction (HJ) DNA during genetic recombination and DNA repair. Endonuclease that resolves HJ intermediates. Cleaves cruciform DNA by making single-stranded nicks across the HJ at symmetrical positions within the homologous arms, yielding a 5'-phosphate and a 3'-hydroxyl group; requires a central core of homology in the junction. The consensus cleavage sequence is 5'-(A/T)TT(C/G)-3'. Cleavage occurs on the 3'-side of the TT dinucleotide at the point of strand exchange. HJ branch migration catalyzed by RuvA-RuvB allows RuvC to scan DNA until it finds its consensus sequence, where it cleaves and resolves the cruciform DNA. This chain is Crossover junction endodeoxyribonuclease RuvC, found in Ruminiclostridium cellulolyticum (strain ATCC 35319 / DSM 5812 / JCM 6584 / H10) (Clostridium cellulolyticum).